A 574-amino-acid chain; its full sequence is Ankyrin repeat protein B18 (574 aa).

ANK repeat units follow at residues 56-87, 135-164, 167-213, 217-249, 253-285, and 327-356; these read TGYT…NVTM, IKSR…DPNF, DGYT…NLNA, CGNT…NFKI, HGLT…NVGE, and EGKT…DINA. The F-box domain occupies 541 to 574; sequence NCLLTLLPSEIIYEILYMLTINDLYNISYPPTKV.

The sequence is that of Ankyrin repeat protein B18 from Homo sapiens (Human).